We begin with the raw amino-acid sequence, 574 residues long: Splicing factor U2af large subunit A (574 aa).

The tract at residues 1 to 180 (MAEHEEQPYE…SKRVSGFDQG (180 aa)) is disordered. Over residues 18 to 41 (PAPASAYAEYPAPEGSPPAAAAKP) the composition is skewed to low complexity. The span at 53–143 (RSQHETQPHD…ERRRDRDRDG (91 aa)) shows a compositional bias: basic and acidic residues. Positions 144–172 (HRRHRSRSRSPSKGRDRRSRSRSRSRSSK) are enriched in basic residues. RRM domains lie at 238–321 (RRVY…RPTD), 358–436 (DRIF…RANQ), and 479–565 (QVVS…YPED).

The protein belongs to the splicing factor SR family.

It is found in the nucleus. Its function is as follows. Necessary for the splicing of pre-mRNA. In Oryza sativa subsp. japonica (Rice), this protein is Splicing factor U2af large subunit A (U2AF65A).